A 275-amino-acid chain; its full sequence is Trans-aconitate 2-methyltransferase (275 aa).

Belongs to the methyltransferase superfamily. Tam family.

It is found in the cytoplasm. It catalyses the reaction trans-aconitate + S-adenosyl-L-methionine = (E)-3-(methoxycarbonyl)pent-2-enedioate + S-adenosyl-L-homocysteine. Its function is as follows. Catalyzes the S-adenosylmethionine monomethyl esterification of trans-aconitate. This Pseudomonas aeruginosa (strain ATCC 15692 / DSM 22644 / CIP 104116 / JCM 14847 / LMG 12228 / 1C / PRS 101 / PAO1) protein is Trans-aconitate 2-methyltransferase.